The sequence spans 448 residues: MNITTAPGLIGRSTQAITPGYMSGFGNSFETEALPGALPIGRNSPQRAPYGLYAEQLSGSPFTAPRGSNERSWLYRIRPSVQHSGRFEKAEAGLWRSAPCHEHDMPIAQLRWDPPPLPQRAQTFLQGVETMTTAGDVNTQAGMAAHMYLISASMVNQHFYNADGELMFVPQQGGLRLVTEFGVIGVAPGEIAVIPRGVKFRVELIDGPARGYLCENYGGGFTLPERGPIGANCLANARDFLTPVAAYEDSDTPTELYVKWGGALWVTQLPHSPIDVVAWHGNYAPYKYDLRTFSPVGAIGFDHPDPSIFTVLTSPSETAGTANIDFVIFPERWMVAENTFRPPWYHMNIMSEFMGLIYGVYDAKPQGFLPGGASLHNMMLPHGPDREAFDHASNAELKPVKLEGTLAFMFETRYPQRVTVHAATSSTLQADYAECWRGLQKRFDPTKP.

The active-site Proton acceptor is histidine 303. The Fe cation site is built by histidine 346 and glutamate 352. Residues tyrosine 361 and histidine 382 each contribute to the homogentisate site. Residue histidine 382 coordinates Fe cation.

The protein belongs to the homogentisate dioxygenase family. As to quaternary structure, hexamer; dimer of trimers. Requires Fe cation as cofactor.

It catalyses the reaction homogentisate + O2 = 4-maleylacetoacetate + H(+). It participates in amino-acid degradation; L-phenylalanine degradation; acetoacetate and fumarate from L-phenylalanine: step 4/6. Functionally, involved in the catabolism of homogentisate (2,5-dihydroxyphenylacetate or 2,5-OH-PhAc), a central intermediate in the degradation of phenylalanine and tyrosine. Catalyzes the oxidative ring cleavage of the aromatic ring of homogentisate to yield maleylacetoacetate. The polypeptide is Homogentisate 1,2-dioxygenase (Rhodopseudomonas palustris (strain BisB18)).